The following is a 340-amino-acid chain: Chitinase 7 (340 aa).

An N-terminal signal peptide occupies residues M1 to A32. The Chitin-binding type-1 domain maps to E33 to V73. Cystine bridges form between C35–C50, C44–C56, C49–C63, C67–C71, C118–C173, C185–C193, and C293–C323.

This sequence belongs to the glycosyl hydrolase 19 family. Chitinase class I subfamily. In terms of tissue distribution, expressed in pistils, stamens and lodicules.

The catalysed reaction is Random endo-hydrolysis of N-acetyl-beta-D-glucosaminide (1-&gt;4)-beta-linkages in chitin and chitodextrins.. In terms of biological role, hydrolyzes chitin and may play a role in defense against fungal pathogens containing chitin. The chain is Chitinase 7 (Cht7) from Oryza sativa subsp. indica (Rice).